Reading from the N-terminus, the 210-residue chain is Ribosomal RNA large subunit methyltransferase E (210 aa).

Residues G60, W62, D80, D96, and D122 each contribute to the S-adenosyl-L-methionine site. The active-site Proton acceptor is the K162.

The protein belongs to the class I-like SAM-binding methyltransferase superfamily. RNA methyltransferase RlmE family.

Its subcellular location is the cytoplasm. The catalysed reaction is uridine(2552) in 23S rRNA + S-adenosyl-L-methionine = 2'-O-methyluridine(2552) in 23S rRNA + S-adenosyl-L-homocysteine + H(+). Its function is as follows. Specifically methylates the uridine in position 2552 of 23S rRNA at the 2'-O position of the ribose in the fully assembled 50S ribosomal subunit. In Dichelobacter nodosus (strain VCS1703A), this protein is Ribosomal RNA large subunit methyltransferase E.